Consider the following 375-residue polypeptide: MKWLSRILTVIVTMSMACGALIFNRRHQLKAKTLNFNHKALTIIIPARNEEKRIGHLLHSIIQQQVPVDVIVMNDGSTDETACVARSYGATVVDVVDDADGKWYGKSHACYQGVTHACTNRIAFVDADVTFLRKDAVEALINQYQLQGEKGLLSVQPYHITKRFYEGFSAIFNLMTVVGMNVFSTLDDGRTNQHAFGPVTLTNKEDYYATGGHKSANRHIIEGFALGSAYTSQSLPVTVYEGFPFVAFRMYQEGFQSLQEGWTKHLSTGAGGTKPKIMAAIVLWLFGSIASILGLCLSLKYRQMSVGKMLTVYLSYTTQFIYLHRRVGQFSNLLMVCHPLLFMFFTKIFIQSWKQTHRYGVVEWKGRQYSISKEQ.

The next 4 helical transmembrane spans lie at 3-23, 164-184, 277-297, and 330-350; these read WLSR…ALIF, FYEG…NVFS, IMAA…GLCL, and FSNL…KIFI.

The protein belongs to the glycosyltransferase 2 family. CrtQ subfamily.

Its subcellular location is the cell membrane. It participates in carotenoid biosynthesis; staphyloxanthin biosynthesis; staphyloxanthin from farnesyl diphosphate: step 4/5. Functionally, catalyzes the glycosylation of 4,4'-diaponeurosporenoate, i.e. the esterification of glucose at the C1'' position with the carboxyl group of 4,4'-diaponeurosporenic acid, to form glycosyl-4,4'-diaponeurosporenoate. This is a step in the biosynthesis of staphyloxanthin, an orange pigment present in most staphylococci strains. The chain is 4,4'-diaponeurosporenoate glycosyltransferase (crtQ) from Staphylococcus aureus (strain MRSA252).